A 195-amino-acid polypeptide reads, in one-letter code: Pyridoxal 5'-phosphate synthase subunit PdxT (195 aa).

46–48 (GES) provides a ligand contact to L-glutamine. Residue Cys78 is the Nucleophile of the active site. L-glutamine contacts are provided by residues Arg106 and 134–135 (IR). Catalysis depends on charge relay system residues His170 and Glu172.

Belongs to the glutaminase PdxT/SNO family. In terms of assembly, in the presence of PdxS, forms a dodecamer of heterodimers. Only shows activity in the heterodimer.

The catalysed reaction is aldehydo-D-ribose 5-phosphate + D-glyceraldehyde 3-phosphate + L-glutamine = pyridoxal 5'-phosphate + L-glutamate + phosphate + 3 H2O + H(+). The enzyme catalyses L-glutamine + H2O = L-glutamate + NH4(+). Its pathway is cofactor biosynthesis; pyridoxal 5'-phosphate biosynthesis. In terms of biological role, catalyzes the hydrolysis of glutamine to glutamate and ammonia as part of the biosynthesis of pyridoxal 5'-phosphate. The resulting ammonia molecule is channeled to the active site of PdxS. This is Pyridoxal 5'-phosphate synthase subunit PdxT from Pseudothermotoga lettingae (strain ATCC BAA-301 / DSM 14385 / NBRC 107922 / TMO) (Thermotoga lettingae).